The sequence spans 228 residues: Cytochrome b6-f complex iron-sulfur subunit 1, chloroplastic (228 aa).

A chloroplast-targeting transit peptide spans 1 to 49 (MASSTLSPVTQLCSSKSGLSSVSQCLLVKPMKINSHGLGKDKRMKVKCM). The helical transmembrane segment at 72 to 92 (LLGALSLPTAGMLVPYGTFFV) threads the bilayer. In terms of domain architecture, Rieske spans 115-211 (ASEWLKTHPP…ADIDDGKVVF (97 aa)). [2Fe-2S] cluster is bound by residues Cys157, His159, Cys175, and His178. A disulfide bond links Cys162 and Cys177.

It belongs to the Rieske iron-sulfur protein family. As to quaternary structure, the 4 large subunits of the cytochrome b6-f complex are cytochrome b6, subunit IV (17 kDa polypeptide, petD), cytochrome f and the Rieske protein, while the 4 small subunits are petG, petL, petM and petN. The complex functions as a dimer. [2Fe-2S] cluster is required as a cofactor.

Its subcellular location is the plastid. It localises to the chloroplast thylakoid membrane. The enzyme catalyses 2 oxidized [plastocyanin] + a plastoquinol + 2 H(+)(in) = 2 reduced [plastocyanin] + a plastoquinone + 4 H(+)(out). In terms of biological role, component of the cytochrome b6-f complex, which mediates electron transfer between photosystem II (PSII) and photosystem I (PSI), cyclic electron flow around PSI, and state transitions. This Nicotiana tabacum (Common tobacco) protein is Cytochrome b6-f complex iron-sulfur subunit 1, chloroplastic (petC1).